A 274-amino-acid polypeptide reads, in one-letter code: Large ribosomal subunit protein uL2cz/uL2cy (274 aa).

Residues 224–274 (NPVDHPHGGGEGRAPIGRKKPTTPWGYPALGRRSRKRNKYSDNLILRRRSK) form a disordered region.

This sequence belongs to the universal ribosomal protein uL2 family. In terms of assembly, part of the 50S ribosomal subunit.

It localises to the plastid. The protein resides in the chloroplast. The polypeptide is Large ribosomal subunit protein uL2cz/uL2cy (rpl2-A) (Panax ginseng (Korean ginseng)).